The sequence spans 150 residues: MRLQYRVLDTRLGDSIPLPHYATDGSAGLDLRAMVKEPLTLQPGDTELLPTGMSIFIDDPGYAGMILPRSGLGHKHGIVLGNLVGLIDSDYQGELMVSCWNRGQQPFTLEPGERVAQLVIVPVMQVELKQVESFSASKRGEGGFGHSGRQ.

Substrate-binding positions include 69–71 (RSG), Asn82, 86–88 (LID), and Met96.

The protein belongs to the dUTPase family. Requires Mg(2+) as cofactor.

The catalysed reaction is dUTP + H2O = dUMP + diphosphate + H(+). Its pathway is pyrimidine metabolism; dUMP biosynthesis; dUMP from dCTP (dUTP route): step 2/2. Functionally, this enzyme is involved in nucleotide metabolism: it produces dUMP, the immediate precursor of thymidine nucleotides and it decreases the intracellular concentration of dUTP so that uracil cannot be incorporated into DNA. The polypeptide is Deoxyuridine 5'-triphosphate nucleotidohydrolase (Alcanivorax borkumensis (strain ATCC 700651 / DSM 11573 / NCIMB 13689 / SK2)).